Consider the following 598-residue polypeptide: Probable translation initiation factor IF-2 (598 aa).

Residues 3 to 225 (LRCPIVSVLG…GLAQKFLEQK (223 aa)) form the tr-type G domain. Residues 12–19 (GHVDHGKT) form a G1 region. GTP is bound at residue 12-19 (GHVDHGKT). The tract at residues 37-41 (GITQH) is G2. Residues 76 to 79 (DTPG) form a G3 region. Residues 76 to 80 (DTPGH) and 130 to 133 (NKLD) each bind GTP. The segment at 130–133 (NKLD) is G4. Positions 200–202 (SAM) are G5.

The protein belongs to the TRAFAC class translation factor GTPase superfamily. Classic translation factor GTPase family. IF-2 subfamily.

Function in general translation initiation by promoting the binding of the formylmethionine-tRNA to ribosomes. Seems to function along with eIF-2. The chain is Probable translation initiation factor IF-2 from Methanococcus maripaludis (strain C6 / ATCC BAA-1332).